Consider the following 140-residue polypeptide: Endoribonuclease YbeY (140 aa).

Zn(2+) contacts are provided by H105, H109, and D115.

It belongs to the endoribonuclease YbeY family. The cofactor is Zn(2+).

It localises to the cytoplasm. Its function is as follows. Single strand-specific metallo-endoribonuclease involved in late-stage 70S ribosome quality control and in maturation of the 3' terminus of the 16S rRNA. The protein is Endoribonuclease YbeY of Flavobacterium psychrophilum (strain ATCC 49511 / DSM 21280 / CIP 103535 / JIP02/86).